A 185-amino-acid chain; its full sequence is Dioxygenase easH (185 aa).

Residues His-17, Asp-19, and His-93 each coordinate Fe cation.

It belongs to the PhyH family. As to quaternary structure, homodimer. Requires Fe cation as cofactor.

It functions in the pathway alkaloid biosynthesis; ergot alkaloid biosynthesis. Its function is as follows. Dioxygenase; part of the gene cluster that mediates the biosynthesis of fungal ergot alkaloid ergovaline, the predominant ergopeptine product in E.festucae var. lolii. DmaW catalyzes the first step of ergot alkaloid biosynthesis by condensing dimethylallyl diphosphate (DMAP) and tryptophan to form 4-dimethylallyl-L-tryptophan. The second step is catalyzed by the methyltransferase easF that methylates 4-dimethylallyl-L-tryptophan in the presence of S-adenosyl-L-methionine, resulting in the formation of 4-dimethylallyl-L-abrine. The catalase easC and the FAD-dependent oxidoreductase easE then transform 4-dimethylallyl-L-abrine to chanoclavine-I which is further oxidized by easD in the presence of NAD(+), resulting in the formation of chanoclavine-I aldehyde. Agroclavine dehydrogenase easG then mediates the conversion of chanoclavine-I aldehyde to agroclavine via a non-enzymatic adduct reaction: the substrate is an iminium intermediate that is formed spontaneously from chanoclavine-I aldehyde in the presence of glutathione. The presence of easA is not required to complete this reaction. Further conversion of agroclavine to paspalic acid is a two-step process involving oxidation of agroclavine to elymoclavine and of elymoclavine to paspalic acid, the second step being performed by the elymoclavine oxidase cloA. Paspalic acid is then further converted to D-lysergic acid. Ergovaline is assembled from D-lysergic acid and three different amino acids by the D-lysergyl-peptide-synthetase composed of a monomudular (lpsB) and a trimodular (lpsA) nonribosomal peptide synthetase subunit. This chain is Dioxygenase easH, found in Epichloe festucae var. lolii (Neotyphodium lolii).